The chain runs to 312 residues: GATA zinc finger domain-containing protein 20 (312 aa).

Disordered regions lie at residues methionine 1 to proline 45 and threonine 213 to asparagine 232. A compositionally biased stretch (low complexity) spans glutamine 29 to proline 45. A GATA-type zinc finger spans residues cysteine 260–cysteine 287.

In Dictyostelium discoideum (Social amoeba), this protein is GATA zinc finger domain-containing protein 20 (gtaT).